Reading from the N-terminus, the 445-residue chain is Tubulin beta-5 chain (445 aa).

Residues Gln11, Glu69, Ser138, Gly142, Thr143, Gly144, Asn204, and Asn226 each contribute to the GTP site. Position 69 (Glu69) interacts with Mg(2+). The segment at 420 to 445 (AEYQQYQDATADDEYEEGEEEEEEAA) is disordered. The segment covering 429 to 445 (TADDEYEEGEEEEEEAA) has biased composition (acidic residues).

This sequence belongs to the tubulin family. As to quaternary structure, dimer of alpha and beta chains. A typical microtubule is a hollow water-filled tube with an outer diameter of 25 nm and an inner diameter of 15 nM. Alpha-beta heterodimers associate head-to-tail to form protofilaments running lengthwise along the microtubule wall with the beta-tubulin subunit facing the microtubule plus end conferring a structural polarity. Microtubules usually have 13 protofilaments but different protofilament numbers can be found in some organisms and specialized cells. Mg(2+) serves as cofactor.

It is found in the cytoplasm. The protein localises to the cytoskeleton. Tubulin is the major constituent of microtubules, a cylinder consisting of laterally associated linear protofilaments composed of alpha- and beta-tubulin heterodimers. Microtubules grow by the addition of GTP-tubulin dimers to the microtubule end, where a stabilizing cap forms. Below the cap, tubulin dimers are in GDP-bound state, owing to GTPase activity of alpha-tubulin. The polypeptide is Tubulin beta-5 chain (Gossypium hirsutum (Upland cotton)).